Reading from the N-terminus, the 228-residue chain is MDNYVLNLLQLCDSTFPTGAFSHSFGLETYIQDGIIFNKETFSKWNKAYIKEQLVYSDGLACRLAYEALENNDMDTIWMLDGMLRAQILARESREGSRIIGERLLTLGNQLYPSSRLTSYVDRIAKGVSYGHPAIAFALISHSLSIPKNTTVMSYLFSSNANLVQNAVRGIPLGQTQGQQLIKESQDFIADAWNLIETLTEDDFGITASGIEISQMRHEVLHIRIFMS.

This sequence belongs to the UreF family. In terms of assembly, ureD, UreF and UreG form a complex that acts as a GTP-hydrolysis-dependent molecular chaperone, activating the urease apoprotein by helping to assemble the nickel containing metallocenter of UreC. The UreE protein probably delivers the nickel.

The protein localises to the cytoplasm. In terms of biological role, required for maturation of urease via the functional incorporation of the urease nickel metallocenter. This is Urease accessory protein UreF from Lachnoclostridium phytofermentans (strain ATCC 700394 / DSM 18823 / ISDg) (Clostridium phytofermentans).